The chain runs to 670 residues: MRTALLEVGLEELPASEFYNILEQLETRTRELLKANRIQCDSIEVFVGSRRFGVLLRGLPEKQEGFVEEKKGPPLNVAYDSKGAPTRALEGFLRKNNATFEDIIEKDGYVYISRKIEGKAVEEVLPEVFEDLVMGMSFKKPMRWGTGEYEYVRPVHWIVAMLDDRVLNLTLFGLRASHVSYGKRYHSGALKINTPEEYYEVLKSGYVMASHEERKKSVLKQLEDFERTYGMKVERDEALIAEIVAMTEYPRILVGQFDQKYLELPEEIIVTAVKHHQRAFVAHKDGLTNFFVAFQDGPQSSENVVKGYERVINARLEDARYYFHKDLEMSLGEMNERLKGIVFQERLGTLYDKVERIVKISRKICGELKFPEDFTEKVLKVASLCKADIASKVVYEFPELQGVMGRIYALKEGMDEELAFAIEDHYSENPETVIGSVLGMADRLDTIVGNFAIGNIPTSSKDPYGLKGKADTVFRIVRKNEWDVSLEELLNFAASLVGFHLSNDLEEFFSSRFYQFLINEIGVSYDVARAVNHLWKKPLRGTLAAEALQNISERPEFQDLFVGFERVHNITKKHDSREFDGALFEKEEEKRLMNKFFEVKEKVLKALERLNYEEALQYLIELKPYIDEYFDNVFVMVNRDDLRMNRLGFLKNIDDLFMMIGDMSHLVKRT.

It belongs to the class-II aminoacyl-tRNA synthetase family. Tetramer of two alpha and two beta subunits.

Its subcellular location is the cytoplasm. It catalyses the reaction tRNA(Gly) + glycine + ATP = glycyl-tRNA(Gly) + AMP + diphosphate. In Thermotoga neapolitana (strain ATCC 49049 / DSM 4359 / NBRC 107923 / NS-E), this protein is Glycine--tRNA ligase beta subunit.